We begin with the raw amino-acid sequence, 315 residues long: tRNA dimethylallyltransferase (315 aa).

Position 13 to 20 (13 to 20 (GPTAVGKT)) interacts with ATP. Position 15–20 (15–20 (TAVGKT)) interacts with substrate. The tract at residues 38 to 41 (DSMQ) is interaction with substrate tRNA.

The protein belongs to the IPP transferase family. Monomer. Mg(2+) serves as cofactor.

It catalyses the reaction adenosine(37) in tRNA + dimethylallyl diphosphate = N(6)-dimethylallyladenosine(37) in tRNA + diphosphate. Its function is as follows. Catalyzes the transfer of a dimethylallyl group onto the adenine at position 37 in tRNAs that read codons beginning with uridine, leading to the formation of N6-(dimethylallyl)adenosine (i(6)A). This chain is tRNA dimethylallyltransferase, found in Staphylococcus saprophyticus subsp. saprophyticus (strain ATCC 15305 / DSM 20229 / NCIMB 8711 / NCTC 7292 / S-41).